The following is an 85-amino-acid chain: Small ribosomal subunit protein uS17 (85 aa).

The protein belongs to the universal ribosomal protein uS17 family. As to quaternary structure, part of the 30S ribosomal subunit.

In terms of biological role, one of the primary rRNA binding proteins, it binds specifically to the 5'-end of 16S ribosomal RNA. The polypeptide is Small ribosomal subunit protein uS17 (Actinobacillus succinogenes (strain ATCC 55618 / DSM 22257 / CCUG 43843 / 130Z)).